The primary structure comprises 452 residues: MIIKALAIVSLCLASIQASKVGAPQLPKKHLVCYYDSASFVKEGLGKLVIDELEPALQFCDYLVYGYAGIERDSHKAVSLNQQLDLDLGKGLYRTVTRLKRKYPNVKILLSVGGDKDIELDKDAKELPNKYLELLESPTGRTRFVNTVYSLVKTYGFDGLDVAWQFPKNKPKKVHSGIGSLWKGFKKVFSGDSIVDEKSEEHKEQFTALLRDVKNAFRPDNLLLSTTVLPNVNSSLFYDIPAVVNYLDFVNLGTFDFFTPQRNPEVADYAAPIYELSERNPEFNVAAQVKYWLRNNCPASKINVGVATYGRPWKLTDDSGDTGVPPVKDVKDEAPVGGNTQVPGIYSWPEVCALLPNQNNAYLKGANAPLIKVQDPAKRFGSYAYRAADKKGDNGIWVSFEDPDTAADKAGYVRTENLGGVALFDLSYDDFRGLCTNEKYPILRAIKYRLTN.

The first 18 residues, 1–18 (MIIKALAIVSLCLASIQA), serve as a signal peptide directing secretion. In terms of domain architecture, GH18 spans 29-452 (KHLVCYYDSA…LRAIKYRLTN (424 aa)). A disulfide bond links C33 and C60. N-linked (GlcNAc...) asparagine glycosylation occurs at N233. C352 and C435 are disulfide-bonded.

It belongs to the glycosyl hydrolase 18 family. IDGF subfamily. In terms of processing, glycosylated. In larvae, it is expressed in the fat body and by hemocytes.

Its subcellular location is the secreted. Probably required to stimulate the proliferation, polarization and motility of imaginal disk cells. May act by stabilizing the binding of insulin-like peptides to its receptor through a simultaneous interaction with both molecules to form a multiprotein signaling complex. This is Imaginal disk growth factor 6 from Drosophila melanogaster (Fruit fly).